Reading from the N-terminus, the 423-residue chain is Imidazolonepropionase (423 aa).

Fe(3+) contacts are provided by histidine 80 and histidine 82. Residues histidine 80 and histidine 82 each contribute to the Zn(2+) site. 4-imidazolone-5-propanoate is bound by residues arginine 89, tyrosine 152, and histidine 185. Residue tyrosine 152 coordinates N-formimidoyl-L-glutamate. Position 250 (histidine 250) interacts with Fe(3+). Residue histidine 250 coordinates Zn(2+). Residue glutamine 253 participates in 4-imidazolone-5-propanoate binding. Aspartate 325 contacts Fe(3+). Aspartate 325 contributes to the Zn(2+) binding site. N-formimidoyl-L-glutamate-binding residues include asparagine 327 and glycine 329. 4-imidazolone-5-propanoate is bound at residue threonine 330.

Belongs to the metallo-dependent hydrolases superfamily. HutI family. It depends on Zn(2+) as a cofactor. Fe(3+) serves as cofactor.

It localises to the cytoplasm. The catalysed reaction is 4-imidazolone-5-propanoate + H2O = N-formimidoyl-L-glutamate. Its pathway is amino-acid degradation; L-histidine degradation into L-glutamate; N-formimidoyl-L-glutamate from L-histidine: step 3/3. In terms of biological role, catalyzes the hydrolytic cleavage of the carbon-nitrogen bond in imidazolone-5-propanoate to yield N-formimidoyl-L-glutamate. It is the third step in the universal histidine degradation pathway. This Cupriavidus pinatubonensis (strain JMP 134 / LMG 1197) (Cupriavidus necator (strain JMP 134)) protein is Imidazolonepropionase.